The chain runs to 159 residues: MSEEKSRNGPARLKLVLGGATLGVVALATVAFGMKYTDQRPFCTSCHIMNPVGVTHKLSGHANISCNDCHAPHNLLAKLPFKAIAGARDVYMNTLGHPGDLILAGMETKEVVNANCKACHTMTNVEVASMEAKKYCTDCHRNVQHMRMKPISTREVADE.

Over 2–14 (SEEKSRNGPARLK) the chain is Cytoplasmic. A helical; Signal-anchor for type II membrane protein transmembrane segment spans residues 15–33 (LVLGGATLGVVALATVAFG). Residues 34–159 (MKYTDQRPFC…PISTREVADE (126 aa)) are Periplasmic-facing. Heme is bound by residues Cys-43, Cys-46, Met-49, His-61, and Cys-66. A menaquinol is bound at residue Asn-67. Heme is bound by residues Cys-69 and His-70. A menaquinol is bound by residues Lys-82 and Asp-89. Asp-89 contacts heme. Residues 99–100 (GD) form an interaction with NrfA region. Cys-116, Cys-119, His-120, Cys-136, Cys-139, His-140, and His-145 together coordinate heme. An interaction with NrfA region spans residues 123 to 158 (TNVEVASMEAKKYCTDCHRNVQHMRMKPISTREVAD).

It belongs to the NapC/NirT/NrfH family. In terms of assembly, component of the NrfHA cytochrome c nitrite reductase complex composed of 4 NrfA catalytic subunits and 2 NrfH quinone-binding subunits. Interacts with NrfA homodimer. The cofactor is heme.

It is found in the cell inner membrane. Electron donor subunit of the cytochrome c nitrite reductase holocomplex NrfHA. Acquires electrons from the menaquinone pool and mediates their transfer to the catalytic subunit NrfA in an anaerobic respiratory process of nitrite. The other biological function of the NrfHA holocomplex is to detoxify nitrite. This function is essential for the survival of this organism as it enables it to overcome inhibition by nitrite, which is produced by other organisms living in the same environment. The sequence is that of Cytochrome c nitrite reductase subunit NrfH from Nitratidesulfovibrio vulgaris (strain ATCC 29579 / DSM 644 / CCUG 34227 / NCIMB 8303 / VKM B-1760 / Hildenborough) (Desulfovibrio vulgaris).